The following is a 218-amino-acid chain: uncharacterized protein (218 aa).

The 83-residue stretch at 111-193 (NSIYLVEGDF…ITKVIEIKAA (83 aa)) folds into the Toprim domain.

This is an uncharacterized protein from Mycoplasma genitalium (strain ATCC 33530 / DSM 19775 / NCTC 10195 / G37) (Mycoplasmoides genitalium).